Reading from the N-terminus, the 467-residue chain is Glycogen synthase kinase-3 (467 aa).

The segment covering 1-20 (MSSKDQILEKDKKETDDNGN) has biased composition (basic and acidic residues). The disordered stretch occupies residues 1–42 (MSSKDQILEKDKKETDDNGNKKTTTTTSSSSSSSSSSKPRSN). Positions 23–37 (TTTTTSSSSSSSSSS) are enriched in low complexity. The Protein kinase domain maps to 56 to 339 (YITEGVIGNG…PVEICAHPFF (284 aa)). Residues 62–70 (IGNGSFGVV) and Lys85 each bind ATP. Residue Asp179 is the Proton acceptor of the active site. Phosphotyrosine; by zakA is present on residues Tyr214 and Tyr220. Residues 400-467 (SSNQSSSSNS…TTTTTTTSNH (68 aa)) form a disordered region.

It belongs to the protein kinase superfamily. CMGC Ser/Thr protein kinase family. GSK-3 subfamily. Requires Mg(2+) as cofactor.

The catalysed reaction is L-seryl-[tau protein] + ATP = O-phospho-L-seryl-[tau protein] + ADP + H(+). The enzyme catalyses L-threonyl-[tau protein] + ATP = O-phospho-L-threonyl-[tau protein] + ADP + H(+). Inhibited by lithium. Lithium inhibition is competitive with respect to magnesium but non-competitive with respect to the peptide substrate. In terms of biological role, during cellular differentiation, may mediate an extracellular cyclic AMP stimulated signal transduction pathway that regulates prespore and prestalk B-cell proportions through inhibition of stalk cell formation and induction of prespore cell differentiation. The cAMP receptor carC appears to activate gskA via the tyrosine kinases zakA and zak2, to stimulate prespore differentiation, while carD appears to negatively regulate gskA, to promote prestalk formation. This Dictyostelium discoideum (Social amoeba) protein is Glycogen synthase kinase-3 (gskA).